The following is a 223-amino-acid chain: Phosphoribosylformylglycinamidine synthase subunit PurQ (223 aa).

Positions 3–223 (FAVLVFPGSN…MVKSWREQHV (221 aa)) constitute a Glutamine amidotransferase type-1 domain. Cys-85 acts as the Nucleophile in catalysis. Catalysis depends on residues His-193 and Glu-195.

Part of the FGAM synthase complex composed of 1 PurL, 1 PurQ and 2 PurS subunits.

It localises to the cytoplasm. It carries out the reaction N(2)-formyl-N(1)-(5-phospho-beta-D-ribosyl)glycinamide + L-glutamine + ATP + H2O = 2-formamido-N(1)-(5-O-phospho-beta-D-ribosyl)acetamidine + L-glutamate + ADP + phosphate + H(+). The enzyme catalyses L-glutamine + H2O = L-glutamate + NH4(+). Its pathway is purine metabolism; IMP biosynthesis via de novo pathway; 5-amino-1-(5-phospho-D-ribosyl)imidazole from N(2)-formyl-N(1)-(5-phospho-D-ribosyl)glycinamide: step 1/2. Part of the phosphoribosylformylglycinamidine synthase complex involved in the purines biosynthetic pathway. Catalyzes the ATP-dependent conversion of formylglycinamide ribonucleotide (FGAR) and glutamine to yield formylglycinamidine ribonucleotide (FGAM) and glutamate. The FGAM synthase complex is composed of three subunits. PurQ produces an ammonia molecule by converting glutamine to glutamate. PurL transfers the ammonia molecule to FGAR to form FGAM in an ATP-dependent manner. PurS interacts with PurQ and PurL and is thought to assist in the transfer of the ammonia molecule from PurQ to PurL. The sequence is that of Phosphoribosylformylglycinamidine synthase subunit PurQ from Staphylococcus aureus (strain USA300).